We begin with the raw amino-acid sequence, 176 residues long: Peptide methionine sulfoxide reductase B3 (176 aa).

Residues 1 to 26 (MNIVNSKILFLSFTLLLLLQSSIVES) form the signal peptide. Residues 51 to 172 (DEEWRAILSP…NSVSLKFTPA (122 aa)) enclose the MsrB domain. Cys90, Cys93, Cys136, and Cys139 together coordinate Zn(2+). A disulfide bridge connects residues Cys108 and Cys161. Cys161 serves as the catalytic Nucleophile.

It belongs to the MsrB Met sulfoxide reductase family. Zn(2+) serves as cofactor.

The protein resides in the endoplasmic reticulum. It catalyses the reaction L-methionyl-[protein] + [thioredoxin]-disulfide + H2O = L-methionyl-(R)-S-oxide-[protein] + [thioredoxin]-dithiol. In terms of biological role, catalyzes the reduction of methionine sulfoxide (MetSO) to methionine in proteins. Plays a protective role against oxidative stress by restoring activity to proteins that have been inactivated by methionine oxidation. Involved in cold tolerance. Eliminates MetSO and reactive oxygen species that accumulate at the ER during cold acclimation. MSRB family specifically reduces the MetSO R-enantiomer. This Arabidopsis thaliana (Mouse-ear cress) protein is Peptide methionine sulfoxide reductase B3 (MSRB3).